The following is a 931-amino-acid chain: G patch domain-containing protein 1 (931 aa).

Disordered regions lie at residues 1–41, 73–92, and 169–209; these read MAAR…TVRD, PSTF…LGPE, and QGVG…EDDD. At A2 the chain carries N-acetylalanine. S6 and S8 each carry phosphoserine. In terms of domain architecture, G-patch spans 152–198; the sequence is KLSVGFELLRKMGWKEGQGVGPRVKRRPRRQKPDPGVKIYGCALPPG. K312 is covalently cross-linked (Glycyl lysine isopeptide (Lys-Gly) (interchain with G-Cter in SUMO2)). S357 and S477 each carry phosphoserine. Disordered stretches follow at residues 568–595 and 659–931; these read RFTH…GDKQ and LPTT…LRRQ. A compositionally biased stretch (basic and acidic residues) spans 582–593; it reads EVPRDQENDVGD. Positions 659–668 are enriched in polar residues; that stretch reads LPTTQASSEK. Positions 669 to 695 are enriched in basic and acidic residues; sequence VSQHRGPDKSRKPSRWDTSKHEKKEDS. Position 715 is a phosphoserine (S715). A compositionally biased stretch (acidic residues) spans 769–780; it reads SEDEQGDSEDDQ. A compositionally biased stretch (polar residues) spans 786-802; it reads ANFQSSQDTDLGETSSV. Residues 852–888 show a composition bias toward basic residues; that stretch reads EKHKKNKDKHKAKKEHRRKKEKKKKHRKHKHKGKQKN. Positions 896–905 are enriched in low complexity; sequence SSESSDSSDS. The span at 922 to 931 shows a compositional bias: basic residues; the sequence is RLKSLPLRRQ.

Belongs to the GPATCH1 family.

The protein is G patch domain-containing protein 1 (GPATCH1) of Homo sapiens (Human).